The following is a 788-amino-acid chain: LPS-assembly protein LptD (788 aa).

A signal peptide spans 1–23; sequence MSLTSRSLLATMISLALYGPAMA.

This sequence belongs to the LptD family. In terms of assembly, component of the lipopolysaccharide transport and assembly complex. Interacts with LptE and LptA.

The protein localises to the cell outer membrane. Its function is as follows. Together with LptE, is involved in the assembly of lipopolysaccharide (LPS) at the surface of the outer membrane. The sequence is that of LPS-assembly protein LptD from Photobacterium profundum (strain SS9).